The chain runs to 351 residues: Holliday junction branch migration complex subunit RuvB (351 aa).

Acidic residues predominate over residues 1 to 12 (MGRFEDDAEVED). The segment at 1 to 23 (MGRFEDDAEVEDREVSPALTVGE) is disordered. Residues 1-191 (MGRFEDDAEV…FGFTAHMDFY (191 aa)) are large ATPase domain (RuvB-L). Residues Leu-30, Arg-31, Gly-72, Lys-75, Thr-76, Ser-77, 138–140 (EDF), Arg-181, Tyr-191, and Arg-228 contribute to the ATP site. Thr-76 contributes to the Mg(2+) binding site. A small ATPAse domain (RuvB-S) region spans residues 192–262 (EPVELERVLA…IAKSALEVYD (71 aa)). Positions 265-351 (ELGLDRLDRA…TGIGQAGLFD (87 aa)) are head domain (RuvB-H). DNA is bound by residues Arg-320 and Arg-325.

Belongs to the RuvB family. As to quaternary structure, homohexamer. Forms an RuvA(8)-RuvB(12)-Holliday junction (HJ) complex. HJ DNA is sandwiched between 2 RuvA tetramers; dsDNA enters through RuvA and exits via RuvB. An RuvB hexamer assembles on each DNA strand where it exits the tetramer. Each RuvB hexamer is contacted by two RuvA subunits (via domain III) on 2 adjacent RuvB subunits; this complex drives branch migration. In the full resolvosome a probable DNA-RuvA(4)-RuvB(12)-RuvC(2) complex forms which resolves the HJ.

It is found in the cytoplasm. It catalyses the reaction ATP + H2O = ADP + phosphate + H(+). In terms of biological role, the RuvA-RuvB-RuvC complex processes Holliday junction (HJ) DNA during genetic recombination and DNA repair, while the RuvA-RuvB complex plays an important role in the rescue of blocked DNA replication forks via replication fork reversal (RFR). RuvA specifically binds to HJ cruciform DNA, conferring on it an open structure. The RuvB hexamer acts as an ATP-dependent pump, pulling dsDNA into and through the RuvAB complex. RuvB forms 2 homohexamers on either side of HJ DNA bound by 1 or 2 RuvA tetramers; 4 subunits per hexamer contact DNA at a time. Coordinated motions by a converter formed by DNA-disengaged RuvB subunits stimulates ATP hydrolysis and nucleotide exchange. Immobilization of the converter enables RuvB to convert the ATP-contained energy into a lever motion, pulling 2 nucleotides of DNA out of the RuvA tetramer per ATP hydrolyzed, thus driving DNA branch migration. The RuvB motors rotate together with the DNA substrate, which together with the progressing nucleotide cycle form the mechanistic basis for DNA recombination by continuous HJ branch migration. Branch migration allows RuvC to scan DNA until it finds its consensus sequence, where it cleaves and resolves cruciform DNA. In Mycolicibacterium smegmatis (strain ATCC 700084 / mc(2)155) (Mycobacterium smegmatis), this protein is Holliday junction branch migration complex subunit RuvB.